The primary structure comprises 220 residues: Pro-Pro endopeptidase (220 aa).

Positions M1–A26 are cleaved as a signal peptide. Residues K35–K220 form the ATLF-like domain. Interacts with substrate peptide stretches follow at residues K101–W103 and G117–S119. Zn(2+) is bound at residue H142. Residue E143 is the Proton acceptor of the active site. Zn(2+) is bound by residues H146, Y178, and E185.

This sequence belongs to the peptidase M34 family. Pro-Pro endopeptidase subfamily. In terms of assembly, monomer. Requires Zn(2+) as cofactor.

It is found in the secreted. The enzyme catalyses The enzyme catalyzes the hydrolytic cleavage of peptide bonds between two proline residues.. Is inhibited by the chelating agent o-phenanthroline in vitro. Zinc-dependent endoprotease with a unique preference for proline residues surrounding the scissile bond. Exhibits a high preference for an asparagine at the P2 position and hydrophobic residues (Val, Ile, Leu) at the P3 position. Efficiently cleaves the LPXTG cell surface proteins CD630_28310 and CD630_32460 at multiple cleavage sites in vivo. Has a role in the regulation of C.difficile adhesion versus motility by cleaving surface adhesion proteins such as the collagen binding protein CD630_28310, and is important for efficient infection. Is also able to cleave fibronectin and fibrinogen in vitro; cleaves at the N-terminus of the beta-chain of fibrinogen. Destabilizes the fibronectin network produced by human fibroblasts. Therefore, may be important in key steps of clostridial pathogenesis by degrading extracellular matrix components associated with the gut epithelial cells. To a lesser extent, IgA1, IgA2, and human HSP 90-beta, but not HSP 90-alpha, are also substrates for the enzyme. Is not active on different collagen types, casein and gelatin. This is Pro-Pro endopeptidase from Clostridioides difficile (strain 630) (Peptoclostridium difficile).